The sequence spans 367 residues: Selenoprotein Pa (367 aa).

An N-terminal signal peptide occupies residues 1 to 19; the sequence is MWKALSLTLALCLLVGCSA. A non-standard amino acid (selenocysteine) is located at residue Sec59. Asn109 carries an N-linked (GlcNAc...) asparagine glycan. Basic and acidic residues predominate over residues 191–220; the sequence is EVNKPVEEEPRQDHGHHEHGHHEHQGEAER. The tract at residues 191–241 is disordered; that stretch reads EVNKPVEEEPRQDHGHHEHGHHEHQGEAERHRHGHHHPHHHHHHHRGQQQV. The segment covering 221 to 237 has biased composition (basic residues); it reads HRHGHHHPHHHHHHHRG. Residues Sec267, Sec273, Sec279, Sec290, Sec292, Sec294, Sec310, Sec320, Sec322, Sec336, Sec338, Sec346, Sec353, Sec355, Sec362, and Sec364 are each a non-standard amino acid (selenocysteine). The tract at residues 309–367 is disordered; the sequence is LUHCDEPLPASUPUQGLKEQDNHIKETUQURPAPPAEUELSQPTUVUPAGDATUGURKK. The span at 326 to 336 shows a compositional bias: basic and acidic residues; the sequence is KEQDNHIKETU.

This sequence belongs to the selenoprotein P family.

Its subcellular location is the secreted. Functionally, might be responsible for some of the extracellular antioxidant defense properties of selenium or might be involved in the transport of selenium. This is Selenoprotein Pa (sepp1a) from Danio rerio (Zebrafish).